Here is a 392-residue protein sequence, read N- to C-terminus: 2'-deamino-2'-hydroxyneamine transaminase (392 aa).

Residue K249 is modified to N6-(pyridoxal phosphate)lysine.

This sequence belongs to the class-III pyridoxal-phosphate-dependent aminotransferase family. Pyridoxal 5'-phosphate is required as a cofactor.

The catalysed reaction is neamine + 2-oxoglutarate = 6'-oxoparomamine + L-glutamate. It catalyses the reaction 2'-deamino-2'-hydroxyneamine + 2-oxoglutarate = 2'-deamino-2'-hydroxy-6'-dehydroparomamine + L-glutamate. Its pathway is antibiotic biosynthesis; kanamycin biosynthesis. Its function is as follows. Aminotransferase that has 6'-oxoglucosaminyl:L-glutamate aminotransferase activity by catalyzing pyridoxal-5'-phosphate-mediated transamination leading to the conversion of paromamine to neamine in the biosynthetic pathway of kanamycin B. This is 2'-deamino-2'-hydroxyneamine transaminase (kacL) from Streptomyces kanamyceticus.